Consider the following 874-residue polypeptide: Probable inorganic carbon transporter subunit DabA (874 aa).

The Zn(2+) site is built by C398, D400, H580, and C595.

It belongs to the inorganic carbon transporter (TC 9.A.2) DabA family. As to quaternary structure, forms a complex with DabB. Zn(2+) serves as cofactor.

The protein localises to the cell membrane. In terms of biological role, part of an energy-coupled inorganic carbon pump. This is Probable inorganic carbon transporter subunit DabA from Bacillus cereus (strain ATCC 10987 / NRS 248).